The sequence spans 92 residues: Cell division protein FtsB (92 aa).

Residues 1–3 are Cytoplasmic-facing; the sequence is MRL. Residues 4–21 traverse the membrane as a helical segment; sequence FVFFMLCLLVLLQYHLWF. The Periplasmic segment spans residues 22–92; the sequence is GKNGLGDRHN…TFFRIVPKED (71 aa). The stretch at 28–62 forms a coiled coil; that stretch reads DRHNLQEEVTLILENNSELRQRNQMMFSEIKDLKE.

Belongs to the FtsB family. As to quaternary structure, part of a complex composed of FtsB, FtsL and FtsQ.

Its subcellular location is the cell inner membrane. Functionally, essential cell division protein. May link together the upstream cell division proteins, which are predominantly cytoplasmic, with the downstream cell division proteins, which are predominantly periplasmic. In Psychromonas ingrahamii (strain DSM 17664 / CCUG 51855 / 37), this protein is Cell division protein FtsB.